The sequence spans 288 residues: Scolexin B (288 aa).

Residues 1–20 form the signal peptide; that stretch reads MFASKLAVCSALALLAVAHA. Residues 21 to 287 form the Peptidase S1 domain; sequence APGGNDIQKI…VRDWIKKVTN (267 aa). The tract at residues 27-56 is disordered; it reads IQKITKAPNVPTKAEGDAASKASAPAIPPK. C72 and C88 are joined by a disulfide. Catalysis depends on charge relay system residues H87 and D145. 2 disulfide bridges follow: C210–C223 and C235–C264. The Charge relay system role is filled by S239.

It belongs to the peptidase S1 family.

This chain is Scolexin B, found in Heliothis virescens (Tobacco budworm moth).